The following is a 317-amino-acid chain: Protein-methionine-sulfoxide reductase catalytic subunit MsrP (317 aa).

The tat-type signal signal peptide spans 1-40 (MKKLTSNDVTPEEIFYQRRKIIKAFGLSAVATALPTFSFA). Residues N71, 74–75 (YE), C129, T164, N216, R221, and 232–234 (SIK) each bind Mo-molybdopterin.

Belongs to the MsrP family. As to quaternary structure, heterodimer of a catalytic subunit (MsrP) and a heme-binding subunit (MsrQ). Requires Mo-molybdopterin as cofactor. Predicted to be exported by the Tat system. The position of the signal peptide cleavage has not been experimentally proven.

The protein localises to the periplasm. The enzyme catalyses L-methionyl-[protein] + a quinone + H2O = L-methionyl-(S)-S-oxide-[protein] + a quinol. The catalysed reaction is L-methionyl-[protein] + a quinone + H2O = L-methionyl-(R)-S-oxide-[protein] + a quinol. Part of the MsrPQ system that repairs oxidized periplasmic proteins containing methionine sulfoxide residues (Met-O), using respiratory chain electrons. Thus protects these proteins from oxidative-stress damage caused by reactive species of oxygen and chlorine generated by the host defense mechanisms. MsrPQ is essential for the maintenance of envelope integrity under bleach stress, rescuing a wide series of structurally unrelated periplasmic proteins from methionine oxidation. The catalytic subunit MsrP is non-stereospecific, being able to reduce both (R-) and (S-) diastereoisomers of methionine sulfoxide. In Histophilus somni (strain 2336) (Haemophilus somnus), this protein is Protein-methionine-sulfoxide reductase catalytic subunit MsrP.